Here is a 712-residue protein sequence, read N- to C-terminus: Polyribonucleotide nucleotidyltransferase (712 aa).

D487 and D493 together coordinate Mg(2+). The region spanning 554–613 (PKIITMTINPDKIRDVIGPSGKQINKIIEETGVKIDIEQDGTVFISSINQEMNDKAKKII) is the KH domain. An S1 motif domain is found at 623-691 (GEIYEGKVKR…KQGRVNLSRK (69 aa)).

This sequence belongs to the polyribonucleotide nucleotidyltransferase family. It depends on Mg(2+) as a cofactor.

The protein resides in the cytoplasm. It carries out the reaction RNA(n+1) + phosphate = RNA(n) + a ribonucleoside 5'-diphosphate. Involved in mRNA degradation. Catalyzes the phosphorolysis of single-stranded polyribonucleotides processively in the 3'- to 5'-direction. The polypeptide is Polyribonucleotide nucleotidyltransferase (Bacillus anthracis (strain CDC 684 / NRRL 3495)).